The following is a 90-amino-acid chain: Large ribosomal subunit protein bL31B (90 aa).

It belongs to the bacterial ribosomal protein bL31 family. Type B subfamily. As to quaternary structure, part of the 50S ribosomal subunit.

In Pseudomonas fluorescens (strain SBW25), this protein is Large ribosomal subunit protein bL31B.